The chain runs to 338 residues: Ketol-acid reductoisomerase (NADP(+)) (338 aa).

The region spanning M1–T181 is the KARI N-terminal Rossmann domain. NADP(+) contacts are provided by residues Y24 to Q27, R47, and S52. The active site involves H107. G133 contacts NADP(+). Residues N182–I327 form the KARI C-terminal knotted domain. Mg(2+) is bound by residues D190, E194, E226, and E230. S251 is a substrate binding site.

Belongs to the ketol-acid reductoisomerase family. The cofactor is Mg(2+).

It carries out the reaction (2R)-2,3-dihydroxy-3-methylbutanoate + NADP(+) = (2S)-2-acetolactate + NADPH + H(+). The enzyme catalyses (2R,3R)-2,3-dihydroxy-3-methylpentanoate + NADP(+) = (S)-2-ethyl-2-hydroxy-3-oxobutanoate + NADPH + H(+). It participates in amino-acid biosynthesis; L-isoleucine biosynthesis; L-isoleucine from 2-oxobutanoate: step 2/4. The protein operates within amino-acid biosynthesis; L-valine biosynthesis; L-valine from pyruvate: step 2/4. Its function is as follows. Involved in the biosynthesis of branched-chain amino acids (BCAA). Catalyzes an alkyl-migration followed by a ketol-acid reduction of (S)-2-acetolactate (S2AL) to yield (R)-2,3-dihydroxy-isovalerate. In the isomerase reaction, S2AL is rearranged via a Mg-dependent methyl migration to produce 3-hydroxy-3-methyl-2-ketobutyrate (HMKB). In the reductase reaction, this 2-ketoacid undergoes a metal-dependent reduction by NADPH to yield (R)-2,3-dihydroxy-isovalerate. In Methylibium petroleiphilum (strain ATCC BAA-1232 / LMG 22953 / PM1), this protein is Ketol-acid reductoisomerase (NADP(+)).